The primary structure comprises 491 residues: Ketol-acid reductoisomerase (NADP(+)) (491 aa).

The region spanning 15-208 (AQLGKCRFMG…GGHRAGVLES (194 aa)) is the KARI N-terminal Rossmann domain. NADP(+)-binding positions include 45 to 48 (CGAQ), arginine 68, arginine 76, serine 78, and 108 to 110 (DKQ). Histidine 132 is a catalytic residue. Residue glycine 158 participates in NADP(+) binding. KARI C-terminal knotted domains are found at residues 209-344 (SFVA…TAPQ) and 345-484 (FEGK…MTDM). Residues aspartate 217, glutamate 221, glutamate 389, and glutamate 393 each contribute to the Mg(2+) site. Serine 414 contacts substrate.

It belongs to the ketol-acid reductoisomerase family. The cofactor is Mg(2+).

It catalyses the reaction (2R)-2,3-dihydroxy-3-methylbutanoate + NADP(+) = (2S)-2-acetolactate + NADPH + H(+). The catalysed reaction is (2R,3R)-2,3-dihydroxy-3-methylpentanoate + NADP(+) = (S)-2-ethyl-2-hydroxy-3-oxobutanoate + NADPH + H(+). Its pathway is amino-acid biosynthesis; L-isoleucine biosynthesis; L-isoleucine from 2-oxobutanoate: step 2/4. The protein operates within amino-acid biosynthesis; L-valine biosynthesis; L-valine from pyruvate: step 2/4. Involved in the biosynthesis of branched-chain amino acids (BCAA). Catalyzes an alkyl-migration followed by a ketol-acid reduction of (S)-2-acetolactate (S2AL) to yield (R)-2,3-dihydroxy-isovalerate. In the isomerase reaction, S2AL is rearranged via a Mg-dependent methyl migration to produce 3-hydroxy-3-methyl-2-ketobutyrate (HMKB). In the reductase reaction, this 2-ketoacid undergoes a metal-dependent reduction by NADPH to yield (R)-2,3-dihydroxy-isovalerate. The protein is Ketol-acid reductoisomerase (NADP(+)) of Salmonella heidelberg (strain SL476).